Consider the following 327-residue polypeptide: Phenylalanine--tRNA ligase alpha subunit (327 aa).

E252 is a binding site for Mg(2+).

It belongs to the class-II aminoacyl-tRNA synthetase family. Phe-tRNA synthetase alpha subunit type 1 subfamily. In terms of assembly, tetramer of two alpha and two beta subunits. The cofactor is Mg(2+).

Its subcellular location is the cytoplasm. It catalyses the reaction tRNA(Phe) + L-phenylalanine + ATP = L-phenylalanyl-tRNA(Phe) + AMP + diphosphate + H(+). The chain is Phenylalanine--tRNA ligase alpha subunit from Shewanella sp. (strain MR-7).